The chain runs to 429 residues: Asparagine--tRNA ligase (429 aa).

It belongs to the class-II aminoacyl-tRNA synthetase family.

Its subcellular location is the cytoplasm. The catalysed reaction is tRNA(Asn) + L-asparagine + ATP = L-asparaginyl-tRNA(Asn) + AMP + diphosphate + H(+). This chain is Asparagine--tRNA ligase, found in Thermoplasma acidophilum (strain ATCC 25905 / DSM 1728 / JCM 9062 / NBRC 15155 / AMRC-C165).